The sequence spans 182 residues: Putative manganese efflux pump MntP (182 aa).

Helical transmembrane passes span 6–26 (LIPL…VSLG), 37–57 (ILYI…IGMV), 71–91 (HFAG…SSIL), 101–121 (IGIS…SVGL), 131–151 (VITI…GLFI), and 162–182 (YGEI…LFPI).

The protein belongs to the MntP (TC 9.B.29) family.

The protein resides in the cell membrane. Probably functions as a manganese efflux pump. The chain is Putative manganese efflux pump MntP from Bacillus cereus (strain AH187).